Consider the following 231-residue polypeptide: 2-C-methyl-D-erythritol 4-phosphate cytidylyltransferase (231 aa).

This sequence belongs to the IspD/TarI cytidylyltransferase family. IspD subfamily. In terms of assembly, homodimer.

It catalyses the reaction 2-C-methyl-D-erythritol 4-phosphate + CTP + H(+) = 4-CDP-2-C-methyl-D-erythritol + diphosphate. It participates in isoprenoid biosynthesis; isopentenyl diphosphate biosynthesis via DXP pathway; isopentenyl diphosphate from 1-deoxy-D-xylulose 5-phosphate: step 2/6. Its function is as follows. Catalyzes the formation of 4-diphosphocytidyl-2-C-methyl-D-erythritol from CTP and 2-C-methyl-D-erythritol 4-phosphate (MEP). This is 2-C-methyl-D-erythritol 4-phosphate cytidylyltransferase from Citrobacter koseri (strain ATCC BAA-895 / CDC 4225-83 / SGSC4696).